We begin with the raw amino-acid sequence, 618 residues long: UvrABC system protein C (618 aa).

The GIY-YIG domain maps to 13 to 92 (DKPGVYLMKN…IKKYRPKYNI (80 aa)). The region spanning 204–239 (LDIVENFKLNMEKAAENLEFEKAAMLRDKINIIEKI) is the UVR domain.

The protein belongs to the UvrC family. In terms of assembly, interacts with UvrB in an incision complex.

The protein resides in the cytoplasm. Its function is as follows. The UvrABC repair system catalyzes the recognition and processing of DNA lesions. UvrC both incises the 5' and 3' sides of the lesion. The N-terminal half is responsible for the 3' incision and the C-terminal half is responsible for the 5' incision. This is UvrABC system protein C from Clostridium botulinum (strain ATCC 19397 / Type A).